The following is a 91-amino-acid chain: DNA-directed RNA polymerase subunit omega (91 aa).

Belongs to the RNA polymerase subunit omega family. The RNAP catalytic core consists of 2 alpha, 1 beta, 1 beta' and 1 omega subunit. When a sigma factor is associated with the core the holoenzyme is formed, which can initiate transcription.

It carries out the reaction RNA(n) + a ribonucleoside 5'-triphosphate = RNA(n+1) + diphosphate. In terms of biological role, promotes RNA polymerase assembly. Latches the N- and C-terminal regions of the beta' subunit thereby facilitating its interaction with the beta and alpha subunits. This Yersinia enterocolitica serotype O:8 / biotype 1B (strain NCTC 13174 / 8081) protein is DNA-directed RNA polymerase subunit omega.